Reading from the N-terminus, the 1032-residue chain is Leucine-rich repeat and coiled-coil domain-containing protein 1 (1032 aa).

LRR repeat units follow at residues 44-65 (TLHA…DHIW), 66-87 (NLQH…NTLT), 88-109 (KLCT…EELI), 110-131 (NLTR…IPLH), and 136-157 (KLRY…LQCM). An LRRCT domain is found at 175-218 (NPVCRLPGYRAVILQTLPQLRILDCKNIFGEPVNLTEINSSQLQ). The segment at 316–345 (DNVLEKDPRPKRDTDITSESDYGNRKECNR) is disordered. The segment covering 318-330 (VLEKDPRPKRDTD) has biased composition (basic and acidic residues). Positions 421–647 (NTYQSLVEQL…DLENEFRIAL (227 aa)) form a coiled coil.

This sequence belongs to the LRRCC1 family.

It localises to the cytoplasm. Its subcellular location is the cytoskeleton. It is found in the microtubule organizing center. The protein localises to the centrosome. The protein resides in the centriole. Its function is as follows. Required for the organization of the mitotic spindle. Maintains the structural integrity of centrosomes during mitosis. The protein is Leucine-rich repeat and coiled-coil domain-containing protein 1 (LRRCC1) of Homo sapiens (Human).